The sequence spans 215 residues: Cytochrome b6 (215 aa).

A helical transmembrane segment spans residues 32-52 (IFYCLGGITFTCFLVQVATGF). Cys35 provides a ligand contact to heme c. Heme b contacts are provided by His86 and His100. 3 consecutive transmembrane segments (helical) span residues 90–110 (ASMMVLMMILHVFRVWLTGGF), 116–136 (LTWTTGVIMAVCTVSFGVTGY), and 186–206 (LHTFVLPLLTAVFMLMHFLMI). Heme b is bound by residues His187 and His202.

Belongs to the cytochrome b family. PetB subfamily. In terms of assembly, the 4 large subunits of the cytochrome b6-f complex are cytochrome b6, subunit IV (17 kDa polypeptide, PetD), cytochrome f and the Rieske protein, while the 4 small subunits are PetG, PetL, PetM and PetN. The complex functions as a dimer. It depends on heme b as a cofactor. Heme c serves as cofactor.

Its subcellular location is the plastid. The protein localises to the chloroplast thylakoid membrane. In terms of biological role, component of the cytochrome b6-f complex, which mediates electron transfer between photosystem II (PSII) and photosystem I (PSI), cyclic electron flow around PSI, and state transitions. The polypeptide is Cytochrome b6 (Stigeoclonium helveticum (Green alga)).